Here is a 224-residue protein sequence, read N- to C-terminus: Small ribosomal subunit protein uS13 (224 aa).

Positions 1–17 (MSEKTDKTEKKQKKAEE) are enriched in basic and acidic residues. Disordered stretches follow at residues 1 to 64 (MSEK…AEEK) and 184 to 224 (HERG…EDKK). 2 stretches are compositionally biased toward low complexity: residues 20–30 (ETASAEAAPAK) and 38–47 (AKPAEGAPAD). Residues 210–224 (KKGEQGGAAKKEDKK) are compositionally biased toward basic and acidic residues.

This sequence belongs to the universal ribosomal protein uS13 family. As to quaternary structure, part of the 30S ribosomal subunit. Forms a loose heterodimer with protein S19. Forms two bridges to the 50S subunit in the 70S ribosome.

Functionally, located at the top of the head of the 30S subunit, it contacts several helices of the 16S rRNA. In the 70S ribosome it contacts the 23S rRNA (bridge B1a) and protein L5 of the 50S subunit (bridge B1b), connecting the 2 subunits; these bridges are implicated in subunit movement. This chain is Small ribosomal subunit protein uS13, found in Methanocella arvoryzae (strain DSM 22066 / NBRC 105507 / MRE50).